A 272-amino-acid polypeptide reads, in one-letter code: Prohibitin 1 (272 aa).

Ala2 carries the N-acetylalanine modification. A Phosphothreonine modification is found at Thr91. 2 positions are modified to N6-acetyllysine: Lys128 and Lys186. The stretch at 177-211 forms a coiled coil; that stretch reads KEFTEAVEAKQVAQQEAERARFVVEKAEQQKKAAI. Lys202 carries the N6-acetyllysine; alternate modification. Lys202 carries the N6-succinyllysine; alternate modification. The residue at position 249 (Tyr249) is a Phosphotyrosine.

It belongs to the prohibitin family. In terms of assembly, interacts with PHB2. Interacts with STOML2. Interacts with CD86 (via cytoplasmic domain); the interactions increases after priming with CD40. (Microbial infection) Interacts with human enterovirus 71/EV-71 capsid protein VP0, protein 3CD and protease 3C. Widely expressed in different tissues.

The protein resides in the mitochondrion inner membrane. The protein localises to the nucleus. It is found in the cell membrane. It localises to the cytoplasm. Target of the anti-cancer drug Rocaglamide (Roc-A). Its function is as follows. Protein with pleiotropic attributes mediated in a cell-compartment- and tissue-specific manner, which include the plasma membrane-associated cell signaling functions, mitochondrial chaperone, and transcriptional co-regulator of transcription factors in the nucleus. Plays a role in adipose tissue and glucose homeostasis in a sex-specific manner. Contributes to pulmonary vascular remodeling by accelerating proliferation of pulmonary arterial smooth muscle cells. In terms of biological role, in the mitochondria, together with PHB2, forms large ring complexes (prohibitin complexes) in the inner mitochondrial membrane (IMM) and functions as a chaperone protein that stabilizes mitochondrial respiratory enzymes and maintains mitochondrial integrity in the IMM, which is required for mitochondrial morphogenesis, neuronal survival, and normal lifespan. The prohibitin complex, with DNAJC19, regulates cardiolipin remodeling and the protein turnover of OMA1 in a cardiolipin-binding manner. Regulates mitochondrial respiration activity playing a role in cellular aging. The prohibitin complex plays a role of mitophagy receptor involved in targeting mitochondria for autophagic degradation. Involved in mitochondrial-mediated antiviral innate immunity, activates RIG-I-mediated signal transduction and production of IFNB1 and pro-inflammatory cytokine IL6. Functionally, in the nucleus, acts as a transcription coregulator, enhances promoter binding by TP53, a transcription factor it activates, but reduces the promoter binding by E2F1, a transcription factor it represses. Interacts with STAT3 to affect IL17 secretion in T-helper Th17 cells. In the plasma membrane, cooperates with CD86 to mediate CD86-signaling in B lymphocytes that regulates the level of IgG1 produced through the activation of distal signaling intermediates. Upon CD40 engagement, required to activate NF-kappa-B signaling pathway via phospholipase C and protein kinase C activation. Its function is as follows. (Microbial infection) In neuronal cells, cell surface-expressed PHB1 is involved in human enterovirus 71/EV-71 entry into neuronal cells specifically, while membrane-bound mitochondrial PHB1 associates with the virus replication complex and facilitates viral replication. May serve as a receptor for EV71. In Mus musculus (Mouse), this protein is Prohibitin 1 (Phb1).